We begin with the raw amino-acid sequence, 241 residues long: MORN repeat-containing protein 3 (241 aa).

The tract at residues 6 to 35 (CPQKSEPLWKEWDQKAQKNGLRHQVFAVNG) is interaction with MDM2. MORN repeat units lie at residues 38 to 60 (YVGEWKDNVKHGKGTQVWKKNGA), 62 to 84 (YEGDWKSGKRDGYGTLSLPDQET), 91 to 113 (YSGWWKGDKKCGYGIQFFGPKEY), 114 to 136 (YEGDWCGNQRSGWGRMYYSNGDI), 137 to 159 (YEGQWRNDKPEGEGMLRLKNGNR), 160 to 182 (YEGNWQRGVKNGSGRFFHLDHGQ), and 184 to 205 (FEGFWVDDVAKCGTMIDFGRDE). The interaction with SIRT1 stretch occupies residues 76–100 (TLSLPDQETGKYKRAYSGWWKGDKK). Residues 206-240 (APQPTQFPIPEVKILDPDGVLEEALAMFKKTKEEG) form an interaction with TP53 region.

As to quaternary structure, interacts with MEIG1. Interacts with TP53, MDM2 and SIRT1; the interactions mediate post-transcriptional modifications of TP53 by MDM2 and SIRT1.

The protein localises to the cytoplasmic vesicle. It is found in the secretory vesicle. The protein resides in the acrosome. Functionally, assembles a suppression complex (suppresome) by tethering SIRT1 and MDM2 to regulate composite modifications of p53/TP53. Confers both deacetylation-mediated functional inactivation, by SIRT1, and ubiquitination-dependent degradation, by MDM2, of p53/TP53, promoting a proliferative and cell survival behaviors. May play a role in the regulation of spermatogenesis. The polypeptide is MORN repeat-containing protein 3 (MORN3) (Bos taurus (Bovine)).